We begin with the raw amino-acid sequence, 156 residues long: Small ribosomal subunit protein uS7c (156 aa).

It belongs to the universal ribosomal protein uS7 family. Part of the 30S ribosomal subunit.

The protein resides in the plastid. It is found in the chloroplast. Its function is as follows. One of the primary rRNA binding proteins, it binds directly to 16S rRNA where it nucleates assembly of the head domain of the 30S subunit. The polypeptide is Small ribosomal subunit protein uS7c (rps7) (Guillardia theta (Cryptophyte)).